The sequence spans 343 residues: Anthranilate phosphoribosyltransferase (343 aa).

5-phospho-alpha-D-ribose 1-diphosphate-binding positions include glycine 84, 87–88, threonine 92, 94–97, 112–120, and serine 124; these read GD, NIST, and KHGNRSVSS. Glycine 84 contributes to the anthranilate binding site. A Mg(2+)-binding site is contributed by serine 96. Asparagine 115 serves as a coordination point for anthranilate. Arginine 170 is an anthranilate binding site. The Mg(2+) site is built by aspartate 229 and glutamate 230.

It belongs to the anthranilate phosphoribosyltransferase family. Homodimer. The cofactor is Mg(2+).

The catalysed reaction is N-(5-phospho-beta-D-ribosyl)anthranilate + diphosphate = 5-phospho-alpha-D-ribose 1-diphosphate + anthranilate. It functions in the pathway amino-acid biosynthesis; L-tryptophan biosynthesis; L-tryptophan from chorismate: step 2/5. Its function is as follows. Catalyzes the transfer of the phosphoribosyl group of 5-phosphorylribose-1-pyrophosphate (PRPP) to anthranilate to yield N-(5'-phosphoribosyl)-anthranilate (PRA). The polypeptide is Anthranilate phosphoribosyltransferase (Stenotrophomonas maltophilia (strain R551-3)).